The sequence spans 370 residues: Phosphate acyltransferase (370 aa).

The protein belongs to the PlsX family. Homodimer. Probably interacts with PlsY.

The protein resides in the cytoplasm. It catalyses the reaction a fatty acyl-[ACP] + phosphate = an acyl phosphate + holo-[ACP]. It functions in the pathway lipid metabolism; phospholipid metabolism. Its function is as follows. Catalyzes the reversible formation of acyl-phosphate (acyl-PO(4)) from acyl-[acyl-carrier-protein] (acyl-ACP). This enzyme utilizes acyl-ACP as fatty acyl donor, but not acyl-CoA. The sequence is that of Phosphate acyltransferase from Polaromonas naphthalenivorans (strain CJ2).